The chain runs to 431 residues: Glutamyl-tRNA(Gln) amidotransferase subunit A (431 aa).

Catalysis depends on charge relay system residues K55 and S130. Catalysis depends on S154, which acts as the Acyl-ester intermediate.

The protein belongs to the amidase family. GatA subfamily. As to quaternary structure, heterotrimer of A, B and C subunits.

The enzyme catalyses L-glutamyl-tRNA(Gln) + L-glutamine + ATP + H2O = L-glutaminyl-tRNA(Gln) + L-glutamate + ADP + phosphate + H(+). Its function is as follows. Allows the formation of correctly charged Gln-tRNA(Gln) through the transamidation of misacylated Glu-tRNA(Gln) in organisms which lack glutaminyl-tRNA synthetase. The reaction takes place in the presence of glutamine and ATP through an activated gamma-phospho-Glu-tRNA(Gln). The polypeptide is Glutamyl-tRNA(Gln) amidotransferase subunit A (Methanococcus maripaludis (strain C6 / ATCC BAA-1332)).